Reading from the N-terminus, the 125-residue chain is Profilin-A (125 aa).

The residue at position 2 (Ser2) is an N-acetylserine.

The protein belongs to the profilin family. In terms of assembly, occurs in many kinds of cells as a complex with monomeric actin in a 1:1 ratio.

It localises to the cytoplasm. It is found in the cytoskeleton. Binds to actin and affects the structure of the cytoskeleton. At high concentrations, profilin prevents the polymerization of actin, whereas it enhances it at low concentrations. By binding to PIP2, it inhibits the formation of IP3 and DG. In Physarum polycephalum (Slime mold), this protein is Profilin-A (PROA).